We begin with the raw amino-acid sequence, 344 residues long: UDP-N-acetylenolpyruvoylglucosamine reductase (344 aa).

The FAD-binding PCMH-type domain occupies 19–189 (INVTAKKIIF…IAVGIKIKKN (171 aa)). Arg165 is a catalytic residue. Residue Ser235 is the Proton donor of the active site. Glu331 is a catalytic residue.

Belongs to the MurB family. It depends on FAD as a cofactor.

It localises to the cytoplasm. The catalysed reaction is UDP-N-acetyl-alpha-D-muramate + NADP(+) = UDP-N-acetyl-3-O-(1-carboxyvinyl)-alpha-D-glucosamine + NADPH + H(+). It functions in the pathway cell wall biogenesis; peptidoglycan biosynthesis. Its function is as follows. Cell wall formation. The protein is UDP-N-acetylenolpyruvoylglucosamine reductase of Buchnera aphidicola subsp. Schizaphis graminum (strain Sg).